A 262-amino-acid polypeptide reads, in one-letter code: Hydroxyethylthiazole kinase (262 aa).

Methionine 50 is a substrate binding site. Positions 125 and 171 each coordinate ATP. Glycine 198 lines the substrate pocket.

The protein belongs to the Thz kinase family. Mg(2+) serves as cofactor.

The catalysed reaction is 5-(2-hydroxyethyl)-4-methylthiazole + ATP = 4-methyl-5-(2-phosphooxyethyl)-thiazole + ADP + H(+). Its pathway is cofactor biosynthesis; thiamine diphosphate biosynthesis; 4-methyl-5-(2-phosphoethyl)-thiazole from 5-(2-hydroxyethyl)-4-methylthiazole: step 1/1. Its function is as follows. Catalyzes the phosphorylation of the hydroxyl group of 4-methyl-5-beta-hydroxyethylthiazole (THZ). The polypeptide is Hydroxyethylthiazole kinase (Escherichia coli O157:H7).